Reading from the N-terminus, the 134-residue chain is T-cell receptor alpha chain V region RL-5 (134 aa).

The first 20 residues, 1 to 20 (MFSASCSVTVVVLLITVRRT), serve as a signal peptide directing secretion. Residues 21–114 (NGASVTQTEG…DSAVYYCALR (94 aa)) are v segment. Positions 115–134 (RGASNKLTLGTGTLLKVELN) are j segment. Asn-134 is a glycosylation site (N-linked (GlcNAc...) asparagine).

Rearrangement with the C region would elongate the sequence with Ile-Thr-; which creates a potential N-glycosylation site at Asn-134.

This is T-cell receptor alpha chain V region RL-5 from Oryctolagus cuniculus (Rabbit).